A 246-amino-acid polypeptide reads, in one-letter code: UDP-N-acetyl-D-mannosaminuronic acid transferase (246 aa).

It belongs to the glycosyltransferase 26 family.

It catalyses the reaction UDP-N-acetyl-alpha-D-mannosaminouronate + N-acetyl-alpha-D-glucosaminyl-di-trans,octa-cis-undecaprenyl diphosphate = beta-D-ManNAcA-(1-&gt;4)-alpha-D-GlcNAc-di-trans,octa-cis-undecaprenyl diphosphate + UDP + H(+). It participates in bacterial outer membrane biogenesis; enterobacterial common antigen biosynthesis. Catalyzes the synthesis of Und-PP-GlcNAc-ManNAcA (Lipid II), the second lipid-linked intermediate involved in enterobacterial common antigen (ECA) synthesis. The chain is UDP-N-acetyl-D-mannosaminuronic acid transferase from Yersinia pestis bv. Antiqua (strain Antiqua).